We begin with the raw amino-acid sequence, 165 residues long: Probable deoxyuridine 5'-triphosphate nucleotidohydrolase (165 aa).

Residues 39–49 (GRIDTDGKTIG) are compositionally biased toward basic and acidic residues. The disordered stretch occupies residues 39–64 (GRIDTDGKTIGDRSPVTPTADEDSTD).

This sequence belongs to the dCTP deaminase family. Archaeal dUTPase subfamily.

The catalysed reaction is dUTP + H2O = dUMP + diphosphate + H(+). The protein operates within pyrimidine metabolism; dUMP biosynthesis; dUMP from dCTP (dUTP route): step 2/2. Its function is as follows. This enzyme is involved in nucleotide metabolism: it produces dUMP, the immediate precursor of thymidine nucleotides and it decreases the intracellular concentration of dUTP so that uracil cannot be incorporated into DNA. This chain is Probable deoxyuridine 5'-triphosphate nucleotidohydrolase, found in Halobacterium salinarum (strain ATCC 29341 / DSM 671 / R1).